Here is a 281-residue protein sequence, read N- to C-terminus: Bifunctional protein FolD (281 aa).

NADP(+) contacts are provided by residues 165–167 (GRG), threonine 192, and valine 233.

It belongs to the tetrahydrofolate dehydrogenase/cyclohydrolase family. As to quaternary structure, homodimer.

It catalyses the reaction (6R)-5,10-methylene-5,6,7,8-tetrahydrofolate + NADP(+) = (6R)-5,10-methenyltetrahydrofolate + NADPH. The enzyme catalyses (6R)-5,10-methenyltetrahydrofolate + H2O = (6R)-10-formyltetrahydrofolate + H(+). Its pathway is one-carbon metabolism; tetrahydrofolate interconversion. Its function is as follows. Catalyzes the oxidation of 5,10-methylenetetrahydrofolate to 5,10-methenyltetrahydrofolate and then the hydrolysis of 5,10-methenyltetrahydrofolate to 10-formyltetrahydrofolate. This is Bifunctional protein FolD from Mycolicibacterium paratuberculosis (strain ATCC BAA-968 / K-10) (Mycobacterium paratuberculosis).